Here is a 172-residue protein sequence, read N- to C-terminus: Small ribosomal subunit protein uS5 (172 aa).

In terms of domain architecture, S5 DRBM spans 13–76; the sequence is LVEKMISVNR…EQARHNMMKI (64 aa).

It belongs to the universal ribosomal protein uS5 family. Part of the 30S ribosomal subunit. Contacts proteins S4 and S8.

Functionally, with S4 and S12 plays an important role in translational accuracy. Its function is as follows. Located at the back of the 30S subunit body where it stabilizes the conformation of the head with respect to the body. The polypeptide is Small ribosomal subunit protein uS5 (Chromobacterium violaceum (strain ATCC 12472 / DSM 30191 / JCM 1249 / CCUG 213 / NBRC 12614 / NCIMB 9131 / NCTC 9757 / MK)).